The chain runs to 747 residues: Rho GTPase-activating protein 24 (747 aa).

2 disordered regions span residues 1–20 (MEER…KNTK) and 327–475 (FPKD…GTHS). Positions 17-123 (KNTKCGWLRK…WVKSIRRVIW (107 aa)) constitute a PH domain. The 195-residue stretch at 133–327 (QKLEDTVRYE…VMISKHDRLF (195 aa)) folds into the Rho-GAP domain. 2 stretches are compositionally biased toward polar residues: residues 334–346 (QSKP…SNNN) and 355–367 (GQLQ…NTKE). Residues Ser368, Ser390, Ser395, Ser397, Ser401, Ser412, Ser414, and Ser436 each carry the phosphoserine modification. Over residues 368-380 (SPVRRCSWDKPES) the composition is skewed to basic and acidic residues. Polar residues predominate over residues 381–404 (PQRSSVDNGSPTALSGSKTNSPRN). A compositionally biased stretch (polar residues) spans 431-475 (IVTNGSFSSSNAEGVEKPQTTPNGSLQARRTSSLKSSGTKMGTHS). Thr451 is modified (phosphothreonine). Ser494 is modified (phosphoserine). The disordered stretch occupies residues 581–639 (DFYVGNFEDPVLDGPPQDDLSHPGDYENKSDRRSVGGRSSRATSSSDNSETFVGNTSSN). Positions 599 to 614 (DLSHPGDYENKSDRRS) are enriched in basic and acidic residues. Low complexity predominate over residues 616–629 (GGRSSRATSSSDNS). Residues 630–639 (ETFVGNTSSN) show a composition bias toward polar residues. Positions 648 to 728 (SSLKQEMTKQ…KEMEQFFSTF (81 aa)) form a coiled coil.

Interacts with FLNA. Post-translationally, phosphorylated by ROCK, leading to activate the RacGAP activity.

It localises to the cytoplasm. Its subcellular location is the cytoskeleton. The protein resides in the cell junction. The protein localises to the adherens junction. It is found in the focal adhesion. It localises to the cell projection. In terms of biological role, rho GTPase-activating protein involved in cell polarity, cell morphology and cytoskeletal organization. Acts as a GTPase activator for the Rac-type GTPase by converting it to an inactive GDP-bound state. Controls actin remodeling by inactivating Rac downstream of Rho leading to suppress leading edge protrusion and promotes cell retraction to achieve cellular polarity. Able to suppress RAC1 and CDC42 activity in vitro. Overexpression induces cell rounding with partial or complete disruption of actin stress fibers and formation of membrane ruffles, lamellipodia, and filopodia. Isoform 2 is a vascular cell-specific GAP involved in modulation of angiogenesis. The polypeptide is Rho GTPase-activating protein 24 (Arhgap24) (Mus musculus (Mouse)).